We begin with the raw amino-acid sequence, 364 residues long: DNA replication and repair protein RecF (364 aa).

ATP is bound at residue 30 to 37 (GDNAQGKT).

Belongs to the RecF family.

It localises to the cytoplasm. Its function is as follows. The RecF protein is involved in DNA metabolism; it is required for DNA replication and normal SOS inducibility. RecF binds preferentially to single-stranded, linear DNA. It also seems to bind ATP. This chain is DNA replication and repair protein RecF, found in Clostridium kluyveri (strain ATCC 8527 / DSM 555 / NBRC 12016 / NCIMB 10680 / K1).